The following is a 565-amino-acid chain: Sensor histidine kinase MtrB (565 aa).

Residues 1 to 13 (MMWGSRRRTRSRW) are compositionally biased toward basic residues. The tract at residues 1-21 (MMWGSRRRTRSRWGRSGPMTR) is disordered. A run of 2 helical transmembrane segments spans residues 42-62 (VVAL…FVLT) and 213-233 (GTMI…ALLV). Residues 235-287 (RQVVVPVRSASRIAERFAEGHLSERMPVRGEDDMARLAMSFNDMAESLSRQIT) enclose the HAMP domain. A Histidine kinase domain is found at 302–519 (DVSHELRTPL…CFRLTLPLVR (218 aa)). At histidine 305 the chain carries Phosphohistidine; by autocatalysis. The segment at 524–565 (TTSPLPMKPIPQPSPSGGQSPSTGPQHAKDRARQREHAERSL) is disordered. The span at 538–549 (PSGGQSPSTGPQ) shows a compositional bias: low complexity. A compositionally biased stretch (basic and acidic residues) spans 550–565 (HAKDRARQREHAERSL).

The protein resides in the cell membrane. It carries out the reaction ATP + protein L-histidine = ADP + protein N-phospho-L-histidine.. Its function is as follows. Member of the two-component regulatory system MtrA/MtrB. Seems to function as a membrane-associated protein kinase that phosphorylates MtrA in response to environmental signals. The protein is Sensor histidine kinase MtrB (mtrB) of Mycolicibacterium paratuberculosis (strain ATCC BAA-968 / K-10) (Mycobacterium paratuberculosis).